The chain runs to 612 residues: Probable translation initiation factor IF-2 (612 aa).

One can recognise a tr-type G domain in the interval 11 to 229 (LRQPIVVVLG…VLAGLTQRYL (219 aa)). The interval 20–27 (GHVDHGKT) is G1. 20 to 27 (GHVDHGKT) contributes to the GTP binding site. Positions 45-49 (LITQH) are G2. Residues 84–87 (DTPG) form a G3 region. Residues 84 to 88 (DTPGH) and 138 to 141 (NKID) each bind GTP. A G4 region spans residues 138-141 (NKID). The interval 207 to 209 (SAK) is G5.

The protein belongs to the TRAFAC class translation factor GTPase superfamily. Classic translation factor GTPase family. IF-2 subfamily.

Its function is as follows. Function in general translation initiation by promoting the binding of the formylmethionine-tRNA to ribosomes. Seems to function along with eIF-2. The chain is Probable translation initiation factor IF-2 from Hyperthermus butylicus (strain DSM 5456 / JCM 9403 / PLM1-5).